We begin with the raw amino-acid sequence, 159 residues long: HSP70 co-chaperone SNL1 (159 aa).

Residues M1–K12 lie on the Perinuclear space side of the membrane. A helical; Signal-anchor for type II membrane protein membrane pass occupies residues L13–I35. The Cytoplasmic segment spans residues R36–K159. Residues N39–A64 are disordered. Residues K44 to K58 are compositionally biased toward basic residues. One can recognise a BAG domain in the interval Q73 to K159.

Interacts with the HSP70 family members SSA1, SSA4, and SSB1. These interactions are strongly reduced by ADP and ATP.

The protein resides in the endoplasmic reticulum membrane. The protein localises to the nucleus membrane. Its function is as follows. Stimulator of ATPase activity of molecular chaperones of the HSP70 family (principally of the SSA class). Stimulation is important for HSP70-substrate complex dissociation after folding of newly synthesized or refolded proteins. SNL1 is probably involved in nuclear pore biogenesis and in particular the folding or refolding of misfolded NUP116, GLE2 and NIC96. The chain is HSP70 co-chaperone SNL1 (SNL1) from Saccharomyces cerevisiae (strain ATCC 204508 / S288c) (Baker's yeast).